The sequence spans 304 residues: Non-specific ribonucleoside hydrolase RihC (304 aa).

The active site involves His-233.

The protein belongs to the IUNH family. RihC subfamily.

Its function is as follows. Hydrolyzes both purine and pyrimidine ribonucleosides with a broad-substrate specificity. The protein is Non-specific ribonucleoside hydrolase RihC of Escherichia coli O45:K1 (strain S88 / ExPEC).